The chain runs to 277 residues: 3-methyl-2-oxobutanoate hydroxymethyltransferase (277 aa).

2 residues coordinate Mg(2+): aspartate 43 and aspartate 82. 3-methyl-2-oxobutanoate contacts are provided by residues 43 to 44, aspartate 82, and lysine 112; that span reads DS. Glutamate 114 provides a ligand contact to Mg(2+). Glutamate 181 serves as the catalytic Proton acceptor.

The protein belongs to the PanB family. As to quaternary structure, homodecamer; pentamer of dimers. Requires Mg(2+) as cofactor.

Its subcellular location is the cytoplasm. The enzyme catalyses 3-methyl-2-oxobutanoate + (6R)-5,10-methylene-5,6,7,8-tetrahydrofolate + H2O = 2-dehydropantoate + (6S)-5,6,7,8-tetrahydrofolate. It functions in the pathway cofactor biosynthesis; (R)-pantothenate biosynthesis; (R)-pantoate from 3-methyl-2-oxobutanoate: step 1/2. Catalyzes the reversible reaction in which hydroxymethyl group from 5,10-methylenetetrahydrofolate is transferred onto alpha-ketoisovalerate to form ketopantoate. The polypeptide is 3-methyl-2-oxobutanoate hydroxymethyltransferase (Bacillus licheniformis (strain ATCC 14580 / DSM 13 / JCM 2505 / CCUG 7422 / NBRC 12200 / NCIMB 9375 / NCTC 10341 / NRRL NRS-1264 / Gibson 46)).